We begin with the raw amino-acid sequence, 200 residues long: Recombination protein RecR (200 aa).

A C4-type zinc finger spans residues 57-72 (CDSCQNFSDTEICQIC). The region spanning 80–175 (GTLCVVESPS…LITRLAHGIP (96 aa)) is the Toprim domain.

The protein belongs to the RecR family.

Its function is as follows. May play a role in DNA repair. It seems to be involved in an RecBC-independent recombinational process of DNA repair. It may act with RecF and RecO. The polypeptide is Recombination protein RecR (Marinobacter nauticus (strain ATCC 700491 / DSM 11845 / VT8) (Marinobacter aquaeolei)).